Reading from the N-terminus, the 132-residue chain is Small ribosomal subunit protein uS8 (132 aa).

It belongs to the universal ribosomal protein uS8 family. In terms of assembly, part of the 30S ribosomal subunit. Contacts proteins S5 and S12.

One of the primary rRNA binding proteins, it binds directly to 16S rRNA central domain where it helps coordinate assembly of the platform of the 30S subunit. This chain is Small ribosomal subunit protein uS8, found in Nitrobacter winogradskyi (strain ATCC 25391 / DSM 10237 / CIP 104748 / NCIMB 11846 / Nb-255).